The sequence spans 49 residues: MRVNITLACTETGDRNYISTKNKRTNPERIELKKYSPRLKKHTLHRETK.

Belongs to the bacterial ribosomal protein bL33 family.

This chain is Large ribosomal subunit protein bL33B, found in Oceanobacillus iheyensis (strain DSM 14371 / CIP 107618 / JCM 11309 / KCTC 3954 / HTE831).